Reading from the N-terminus, the 254-residue chain is Protein orai-2 (254 aa).

Helical transmembrane passes span 66–83 (TSAL…EVQL), 94–114 (LIAF…ALLI), 148–168 (LAWG…VVLL), and 196–216 (AALV…VFTI).

The protein belongs to the Orai family. In terms of assembly, oligomerizes in homomeric and heteromeric ORAI complexes. Native CRAC channels most likely consist of hexameric ORAI heteromers, implying that diverse ORAI1, ORAI2 and ORAI3 subunit combinations with distinct biophysical properties can operate in a cell-type specific way. Interacts with STIM1; this regulates channel activity. Interacts with CRACR2A/EFCAB4B.

The protein localises to the cell membrane. The enzyme catalyses Ca(2+)(in) = Ca(2+)(out). Its activity is regulated as follows. CRAC channels are regulated by fast Ca(2+)-dependent inactivation (FCDI), a mechanism that limits Ca(2+) influx and cell toxicity. ORAI2 channels display prominent FCDI. Inhibited by lanthanides such as Gd(3+) ions. Pore-forming subunit of inward rectifying Ca(2+) release-activated Ca(2+) (CRAC) channels. Assembles with ORAI1 and ORAI3 to form hexameric CRAC channels that mediate Ca(2+) influx upon depletion of endoplasmic reticulum Ca(2+) store and channel activation by Ca(2+) sensor STIM1, a process known as store-operated Ca(2+) entry (SOCE). Various pore subunit combinations may account for distinct CRAC channel spatiotemporal and cell-type specific dynamics. ORAI1 mainly contributes to the generation of Ca(2+) plateaus involved in sustained Ca(2+) entry and is dispensable for cytosolic Ca(2+) oscillations, whereas ORAI2 and ORAI3 generate oscillatory patterns. CRAC channels assemble in Ca(2+) signaling microdomains where Ca(2+) influx is coupled to calmodulin and calcineurin signaling and activation of NFAT transcription factors recruited to ORAI1 via AKAP5. CRAC channels are the main pathway for Ca(2+) influx in T cells and promote the immune response to pathogens by activating NFAT-dependent cytokine and chemokine transcription. This Homo sapiens (Human) protein is Protein orai-2 (ORAI2).